Reading from the N-terminus, the 82-residue chain is Cytochrome c oxidase subunit 8, mitochondrial (82 aa).

A mitochondrion-targeting transit peptide spans 1–31 (MFSRVALRAAPRQQPFSLVARRTFQTTRAQL). Residues 32-52 (SSPYHYPEGPRSNLPFNPKTR) lie on the Mitochondrial matrix side of the membrane. The helical transmembrane segment at 53-75 (FFWFRYLMYCVVGFGSPVAIAVW) threads the bilayer. Residues 76–82 (QTYRPRS) lie on the Mitochondrial intermembrane side of the membrane.

It belongs to the cytochrome c oxidase VIIc family. Component of the cytochrome c oxidase (complex IV, CIV), a multisubunit enzyme composed of 11 subunits. The complex is composed of a catalytic core of 3 subunits Cox1, Cox2 and Cox3, encoded in the mitochondrial DNA, and 8 supernumerary subunits Cox4, Cox5a/Cox5, Cox6, Cox7, Cox8, Cox7a/Cox9, Cox6b/Cox12 and Cox6a/Cox13, which are encoded in the nuclear genome. The complex exists as a monomer or a dimer and forms respiratory supercomplexes (SCs) in the inner mitochondrial membrane with NADH-ubiquinone oxidoreductase (complex I, CI) and ubiquinol-cytochrome c oxidoreductase (cytochrome b-c1 complex, complex III, CIII), resulting in various different assemblies (supercomplexes I(1)IV(1), I(1)III(3)IV(2), III(2)IV(1) and III(2)IV(2) as well as larger supercomplexes of compositions like I(1)III(2)IV(5-6)).

It is found in the mitochondrion inner membrane. It participates in energy metabolism; oxidative phosphorylation. Component of the cytochrome c oxidase, the last enzyme in the mitochondrial electron transport chain which drives oxidative phosphorylation. The respiratory chain contains 3 multisubunit complexes succinate dehydrogenase (complex II, CII), ubiquinol-cytochrome c oxidoreductase (cytochrome b-c1 complex, complex III, CIII) and cytochrome c oxidase (complex IV, CIV), that cooperate to transfer electrons derived from NADH and succinate to molecular oxygen, creating an electrochemical gradient over the inner membrane that drives transmembrane transport and the ATP synthase. Cytochrome c oxidase is the component of the respiratory chain that catalyzes the reduction of oxygen to water. Electrons originating from reduced cytochrome c in the intermembrane space (IMS) are transferred via the dinuclear copper A center (CU(A)) of Cox2 and heme A of Cox1 to the active site in Cox1, a binuclear center (BNC) formed by heme A3 and copper B (CU(B)). The BNC reduces molecular oxygen to 2 water molecules using 4 electrons from cytochrome c in the IMS and 4 protons from the mitochondrial matrix. The polypeptide is Cytochrome c oxidase subunit 8, mitochondrial (cox-15) (Neurospora crassa (strain ATCC 24698 / 74-OR23-1A / CBS 708.71 / DSM 1257 / FGSC 987)).